A 348-amino-acid chain; its full sequence is Serpentine receptor class alpha-29 (348 aa).

6 helical membrane-spanning segments follow: residues phenylalanine 28–tryptophan 48, phenylalanine 108–phenylalanine 130, glycine 145–phenylalanine 165, isoleucine 193–isoleucine 213, cysteine 246–phenylalanine 266, and leucine 280–isoleucine 300.

It belongs to the nematode receptor-like protein sra family.

The protein localises to the membrane. In Caenorhabditis elegans, this protein is Serpentine receptor class alpha-29 (sra-29).